The following is a 491-amino-acid chain: Ketol-acid reductoisomerase (NADP(+)) (491 aa).

The KARI N-terminal Rossmann domain maps to 15–208 (AQLGKCRFMG…GGHRAGVLES (194 aa)). NADP(+) is bound by residues 45-48 (CGAQ), arginine 68, arginine 76, serine 78, and 108-110 (DKQ). The active site involves histidine 132. Glycine 158 is a binding site for NADP(+). KARI C-terminal knotted domains are found at residues 209 to 344 (SFVA…TAPQ) and 345 to 484 (YEGK…MTDM). Mg(2+) is bound by residues aspartate 217, glutamate 221, glutamate 389, and glutamate 393. Residue serine 414 participates in substrate binding.

Belongs to the ketol-acid reductoisomerase family. The cofactor is Mg(2+).

The catalysed reaction is (2R)-2,3-dihydroxy-3-methylbutanoate + NADP(+) = (2S)-2-acetolactate + NADPH + H(+). It carries out the reaction (2R,3R)-2,3-dihydroxy-3-methylpentanoate + NADP(+) = (S)-2-ethyl-2-hydroxy-3-oxobutanoate + NADPH + H(+). Its pathway is amino-acid biosynthesis; L-isoleucine biosynthesis; L-isoleucine from 2-oxobutanoate: step 2/4. It functions in the pathway amino-acid biosynthesis; L-valine biosynthesis; L-valine from pyruvate: step 2/4. In terms of biological role, involved in the biosynthesis of branched-chain amino acids (BCAA). Catalyzes an alkyl-migration followed by a ketol-acid reduction of (S)-2-acetolactate (S2AL) to yield (R)-2,3-dihydroxy-isovalerate. In the isomerase reaction, S2AL is rearranged via a Mg-dependent methyl migration to produce 3-hydroxy-3-methyl-2-ketobutyrate (HMKB). In the reductase reaction, this 2-ketoacid undergoes a metal-dependent reduction by NADPH to yield (R)-2,3-dihydroxy-isovalerate. The chain is Ketol-acid reductoisomerase (NADP(+)) from Escherichia coli (strain ATCC 8739 / DSM 1576 / NBRC 3972 / NCIMB 8545 / WDCM 00012 / Crooks).